The primary structure comprises 201 residues: Small ribosomal subunit protein uS4c (201 aa).

The S4 RNA-binding domain occupies 89–150; sequence MRLDNIVFRL…RQKSQAIITK (62 aa).

It belongs to the universal ribosomal protein uS4 family. In terms of assembly, part of the 30S ribosomal subunit. Contacts protein S5. The interaction surface between S4 and S5 is involved in control of translational fidelity.

It localises to the plastid. The protein resides in the chloroplast. Functionally, one of the primary rRNA binding proteins, it binds directly to 16S rRNA where it nucleates assembly of the body of the 30S subunit. With S5 and S12 plays an important role in translational accuracy. This is Small ribosomal subunit protein uS4c (rps4) from Physcomitrium patens (Spreading-leaved earth moss).